A 298-amino-acid chain; its full sequence is N-acetylmuramic acid 6-phosphate etherase (298 aa).

The SIS domain occupies 55–218 (IHAQVSGGGR…STGLMIKSGK (164 aa)). The active-site Proton donor is Glu83. Glu114 is a catalytic residue.

This sequence belongs to the GCKR-like family. MurNAc-6-P etherase subfamily. In terms of assembly, homodimer.

It catalyses the reaction N-acetyl-D-muramate 6-phosphate + H2O = N-acetyl-D-glucosamine 6-phosphate + (R)-lactate. It participates in amino-sugar metabolism; 1,6-anhydro-N-acetylmuramate degradation. The protein operates within amino-sugar metabolism; N-acetylmuramate degradation. Its pathway is cell wall biogenesis; peptidoglycan recycling. Its function is as follows. Specifically catalyzes the cleavage of the D-lactyl ether substituent of MurNAc 6-phosphate, producing GlcNAc 6-phosphate and D-lactate. Together with AnmK, is also required for the utilization of anhydro-N-acetylmuramic acid (anhMurNAc) either imported from the medium or derived from its own cell wall murein, and thus plays a role in cell wall recycling. The protein is N-acetylmuramic acid 6-phosphate etherase of Shigella sonnei (strain Ss046).